The sequence spans 352 residues: Ion-translocating oxidoreductase complex subunit D (352 aa).

The next 5 membrane-spanning stretches (helical) occupy residues 20-40 (IMLLVLLAAVPGIAAQLWFFG), 42-62 (GTLVQILLASVSALLAEALVL), 78-109 (ALLTGLLLAVSIPPLAPWWMVVLGTVFAVIIA), 123-143 (PAMIGYVVLLISFPVQMTSWL), and 148-168 (IAVNIPGFIDAIQVIFSGHTA). Thr187 is subject to FMN phosphoryl threonine. 5 consecutive transmembrane segments (helical) span residues 214–234 (ILAGAGWQWVNLAWLAGGVWL), 242–262 (WHIPLSFLVTLALCAMLGWLF), 267–287 (LAAPQIHLLSGATMLGAFFIL), 301–321 (LIFGALAGLLVWLIRSFGGYP), and 322–342 (DGVAFAVLLANITVPLIDYYT).

This sequence belongs to the NqrB/RnfD family. The complex is composed of six subunits: RsxA, RsxB, RsxC, RsxD, RsxE and RsxG. It depends on FMN as a cofactor.

It is found in the cell inner membrane. In terms of biological role, part of a membrane-bound complex that couples electron transfer with translocation of ions across the membrane. Required to maintain the reduced state of SoxR. Probably transfers electron from NAD(P)H to SoxR. The chain is Ion-translocating oxidoreductase complex subunit D from Escherichia coli (strain K12).